Reading from the N-terminus, the 254-residue chain is 4-hydroxy-tetrahydrodipicolinate reductase (254 aa).

NAD(+) contacts are provided by residues 8 to 13 (GCSGKM), Asp-35, 86 to 88 (CST), and 110 to 113 (SANM). His-143 serves as the catalytic Proton donor/acceptor. Position 144 (His-144) interacts with (S)-2,3,4,5-tetrahydrodipicolinate. Lys-147 functions as the Proton donor in the catalytic mechanism. 153-154 (GT) serves as a coordination point for (S)-2,3,4,5-tetrahydrodipicolinate.

Belongs to the DapB family.

The protein resides in the cytoplasm. The catalysed reaction is (S)-2,3,4,5-tetrahydrodipicolinate + NAD(+) + H2O = (2S,4S)-4-hydroxy-2,3,4,5-tetrahydrodipicolinate + NADH + H(+). It carries out the reaction (S)-2,3,4,5-tetrahydrodipicolinate + NADP(+) + H2O = (2S,4S)-4-hydroxy-2,3,4,5-tetrahydrodipicolinate + NADPH + H(+). It participates in amino-acid biosynthesis; L-lysine biosynthesis via DAP pathway; (S)-tetrahydrodipicolinate from L-aspartate: step 4/4. Functionally, catalyzes the conversion of 4-hydroxy-tetrahydrodipicolinate (HTPA) to tetrahydrodipicolinate. This is 4-hydroxy-tetrahydrodipicolinate reductase from Clostridium perfringens (strain ATCC 13124 / DSM 756 / JCM 1290 / NCIMB 6125 / NCTC 8237 / Type A).